Here is a 198-residue protein sequence, read N- to C-terminus: NAD(P)H dehydrogenase (quinone) (198 aa).

The Flavodoxin-like domain occupies 4 to 189 (ILVLYYSMYG…SIARYQGEYV (186 aa)). FMN-binding positions include 10-15 (SMYGHI) and 78-80 (TRF). Y12 contacts NAD(+). Residue W98 participates in substrate binding. FMN contacts are provided by residues 113-118 (STGTGG) and H133.

The protein belongs to the WrbA family. The cofactor is FMN.

It catalyses the reaction a quinone + NADH + H(+) = a quinol + NAD(+). The catalysed reaction is a quinone + NADPH + H(+) = a quinol + NADP(+). This chain is NAD(P)H dehydrogenase (quinone), found in Salmonella agona (strain SL483).